We begin with the raw amino-acid sequence, 79 residues long: uncharacterized protein (79 aa).

This is an uncharacterized protein from Bacillus subtilis (strain 168).